Consider the following 325-residue polypeptide: Polyprenyl transferase mpaA (325 aa).

The next 3 helical transmembrane spans lie at 27–47 (MPYYTMMAAVWSTLIAGALKL), 56–76 (VEYILFKAGLCFVHCLLLCGA), and 108–128 (VEALVWMVGQYFLSVKMLDLI). Asn131 is a glycosylation site (N-linked (GlcNAc...) asparagine). 6 consecutive transmembrane segments (helical) span residues 134 to 151 (IWGLMLPLTASIMLYPYL), 159 to 179 (VFIYPQYILGLAVAYPSITGW), 192 to 212 (IFTHCTPICLLIFFWCLYFNT), 240 to 260 (LFLAFLGALPLAVIPYVVLKI), 262 to 282 (SPWLWFSWMAVWTVSIVMQIV), and 295 to 315 (IHWDNFLLGLWTTVACIVEVG).

It belongs to the UbiA prenyltransferase family. Mg(2+) serves as cofactor.

Its subcellular location is the golgi apparatus membrane. The enzyme catalyses 5,7-dihydroxy-4-methylphthalide + (2E,6E)-farnesyl diphosphate = 4-farnesyl-3,5-dihydroxy-6-methylphthalide + diphosphate. It participates in secondary metabolite biosynthesis; terpenoid biosynthesis. Functionally, polyprenyl transferase; part of the gene cluster that mediates the biosynthesis of mycophenolic acid (MPA), the first isolated antibiotic natural product in the world obtained from a culture of Penicillium brevicompactum in 1893. MpaA is a Golgi apparatus-associated enzyme that catalyzes the prenylation of 5,7-dihydroxy-4,6-dimethylphthalide (DHMP) to yield farnesyl-DHMP (FDHMP). The first step of the pathway is the synthesis of 5-methylorsellinic acid (5MOA) by the cytosolic polyketide synthase mpaC. 5MOA is then converted to the phthalide compound 5,7-dihydroxy-4,6-dimethylphthalide (DHMP) by the endoplasmic reticulum-bound cytochrome P450 monooxygenase mpaDE. MpaDE first catalyzes hydroxylation of 5-MOA to 4,6-dihydroxy-2-(hydroxymethyl)-3-methylbenzoic acid (DHMB). MpaDE then acts as a lactone synthase that catalyzes the ring closure to convert DHMB into DHMP. The next step is the prenylation of DHMP by the Golgi apparatus-associated prenyltransferase mpaA to yield farnesyl-DHMP (FDHMP). The ER-bound oxygenase mpaB then mediates the oxidative cleavage the C19-C20 double bond in FDHMP to yield FDHMP-3C via a mycophenolic aldehyde intermediate. The O-methyltransferase mpaG catalyzes the methylation of FDHMP-3C to yield MFDHMP-3C. After the cytosolic methylation of FDHMP-3C, MFDHMP-3C enters into peroxisomes probably via free diffusion due to its low molecular weight. Upon a peroxisomal CoA ligation reaction, catalyzed by a beta-oxidation component enzyme acyl-CoA ligase ACL891, MFDHMP-3C-CoA would then be restricted to peroxisomes for the following beta-oxidation pathway steps. The peroxisomal beta-oxidation machinery than converts MFDHMP-3C-CoA into MPA_CoA, via a beta-oxidation chain-shortening process. Finally mpaH acts as a peroxisomal acyl-CoA hydrolase with high substrate specificity toward MPA-CoA to release the final product MPA. This chain is Polyprenyl transferase mpaA, found in Penicillium roqueforti (strain FM164).